A 321-amino-acid chain; its full sequence is Transcription factor MYB60 (321 aa).

HTH myb-type domains lie at 9–65 and 66–116; these read KVGI…RPGI and KRGN…KKKI. 2 DNA-binding regions (H-T-H motif) span residues 37 to 61 and 89 to 112; these read WRSVPTNTGLLRCSKSCRLRWTNYL and WAAIASYLPQRTDNDIKNYWNTHL. S-nitrosocysteine is present on residues Cys49 and Cys53. Disordered stretches follow at residues 196–215 and 263–291; these read SPKATKEKLHQNSSLEEGSI and HHQTTDATIPSDDHDHDHEMKMDHDQKKH. Over residues 206 to 215 the composition is skewed to polar residues; sequence QNSSLEEGSI. Residues 273-290 show a composition bias toward basic and acidic residues; it reads SDDHDHDHEMKMDHDQKK.

As to expression, restricted to stomatal guard cells. Mostly expressed in leaves, cotyledons, hypocotyls, seeds and ripened berry skins.

The protein localises to the nucleus. In terms of biological role, transcription factor involved in the regulation of gene (e.g. drought-regulated and flavonoid biosynthetic genes) expression and stomatal movements leading to negative regulation of responses to drought and responses to other physiological stimuli (e.g. light). This is Transcription factor MYB60 from Vitis vinifera (Grape).